The following is a 122-amino-acid chain: Large ribosomal subunit protein uL14 (122 aa).

This sequence belongs to the universal ribosomal protein uL14 family. Part of the 50S ribosomal subunit. Forms a cluster with proteins L3 and L19. In the 70S ribosome, L14 and L19 interact and together make contacts with the 16S rRNA in bridges B5 and B8.

Its function is as follows. Binds to 23S rRNA. Forms part of two intersubunit bridges in the 70S ribosome. This chain is Large ribosomal subunit protein uL14, found in Leuconostoc citreum (strain KM20).